Reading from the N-terminus, the 572-residue chain is Adenine deaminase (572 aa).

This sequence belongs to the metallo-dependent hydrolases superfamily. Adenine deaminase family. The cofactor is Mn(2+).

It catalyses the reaction adenine + H2O + H(+) = hypoxanthine + NH4(+). This Clostridium perfringens (strain 13 / Type A) protein is Adenine deaminase.